Here is a 725-residue protein sequence, read N- to C-terminus: ATP-dependent DNA helicase II subunit 2 (725 aa).

The Ku domain occupies 232–478; sequence LTLGDPQKYP…QQAMSDYVDA (247 aa).

It belongs to the ku80 family. As to quaternary structure, heterodimer of mus-51/ku70 and mus-52/ku80.

Its subcellular location is the nucleus. The protein localises to the chromosome. It is found in the telomere. It carries out the reaction ATP + H2O = ADP + phosphate + H(+). Functionally, single-stranded DNA-dependent ATP-dependent helicase. Involved in non-homologous end joining (NHEJ) DNA double strand break repair. DNA-binding is sequence-independent but has a high affinity to nicks in double-stranded DNA and to the ends of duplex DNA. Binds to naturally occurring chromosomal ends, and therefore provides chromosomal end protection. Required also for telomere recombination to repair telomeric ends in the absence of telomerase. ku70, of the ku70/ku80 heterodimer, binds to the stem loop of tlc1, the RNA component of telomerase. Involved in telomere maintenance. Interacts with telomeric repeats and subtelomeric sequences thereby controlling telomere length and protecting against subtelomeric rearrangement. Maintains telomeric chromatin, which is involved in silencing the expression of genes located at the telomere. Required for mating-type switching. The sequence is that of ATP-dependent DNA helicase II subunit 2 (mus-52) from Neurospora crassa (strain ATCC 24698 / 74-OR23-1A / CBS 708.71 / DSM 1257 / FGSC 987).